We begin with the raw amino-acid sequence, 1763 residues long: Non-reducing polyketide synthase PKS19 (1763 aa).

The N-terminal acylcarrier protein transacylase domain (SAT) stretch occupies residues 20–261; the sequence is GDQRNLFRKL…PMKKVQGMWH (242 aa). Residues 390–822 enclose the Ketosynthase family 3 (KS3) domain; the sequence is SSKIAVVGMA…GGNTSIIIEE (433 aa). Catalysis depends on for beta-ketoacyl synthase activity residues cysteine 561, histidine 696, and histidine 740. Residues 922 to 1227 are malonyl-CoA:ACP transacylase (MAT) domain; it reads FAFTGQGTFY…QRDTDNWLTL (306 aa). The tract at residues 1307-1439 is N-terminal hotdog fold; that stretch reads HRLISEQYTD…VFYEDPSSWL (133 aa). A PKS/mFAS DH domain is found at 1307-1609; the sequence is HRLISEQYTD…FLQWPRVMLN (303 aa). The product template (PT) domain stretch occupies residues 1334-1588; it reads GVVDGHAMNG…FVGDVYVLQG (255 aa). The active-site Proton acceptor; for dehydratase activity is histidine 1339. The interval 1461–1609 is C-terminal hotdog fold; sequence VTGKASKLTT…FLQWPRVMLN (149 aa). The active-site Proton donor; for dehydratase activity is aspartate 1522. The disordered stretch occupies residues 1619–1690; sequence AKPAAKVPGK…MEELPSPPAG (72 aa). Positions 1635–1647 are enriched in basic residues; sequence PHFKPHHVSRHKP. The region spanning 1689 to 1763 is the Carrier domain; sequence AGMNDDMEKA…TIQDLKALLR (75 aa). Serine 1726 carries the O-(pantetheine 4'-phosphoryl)serine modification.

Non-reducing polyketide synthase that mediates the biosynthesis of alternariol (AOH), a micotoxin that seems not to be involved in virulence and oxidative stress tolerance. PKS19 alone is sufficient for AOH synthesis which is initiated by priming with acetyl-CoA, followed by sequential condensations of 6 malonyl-CoA units. This is Non-reducing polyketide synthase PKS19 from Phaeosphaeria nodorum (strain SN15 / ATCC MYA-4574 / FGSC 10173) (Glume blotch fungus).